The following is a 231-amino-acid chain: Ureidoacrylate amidohydrolase RutB (231 aa).

Aspartate 25 (proton acceptor) is an active-site residue. Lysine 134 is a catalytic residue. Cysteine 167 functions as the Nucleophile in the catalytic mechanism.

The protein belongs to the isochorismatase family. RutB subfamily.

The enzyme catalyses (Z)-3-ureidoacrylate + H2O + H(+) = (Z)-3-aminoacrylate + NH4(+) + CO2. It carries out the reaction (Z)-3-ureidoacrylate + H2O = (Z)-3-aminoacrylate + carbamate + H(+). The catalysed reaction is (Z)-2-methylureidoacrylate + H2O + H(+) = (Z)-2-methylaminoacrylate + NH4(+) + CO2. Hydrolyzes ureidoacrylate to form aminoacrylate and carbamate. The carbamate hydrolyzes spontaneously, thereby releasing one of the nitrogen atoms of the pyrimidine ring as ammonia and one of its carbon atoms as CO2. The protein is Ureidoacrylate amidohydrolase RutB of Escherichia coli O139:H28 (strain E24377A / ETEC).